We begin with the raw amino-acid sequence, 895 residues long: Procollagen lysyl hydroxylase and glycosyltransferase (895 aa).

Residues 1 to 194 (MISRTYVINL…PSDEFIPIMH (194 aa)) form a lysyl hydroxylase region region. Residues 537 to 895 (YYFYISGDCI…KRYILVSFVN (359 aa)) form a glucosyl transferase region region. The region spanning 805-895 (DINLAFVVKY…KRYILVSFVN (91 aa)) is the Fe2OG dioxygenase domain. 3 residues coordinate Fe cation: His-825, Asp-827, and His-877. The active site involves Arg-887.

It depends on Fe cation as a cofactor. Requires L-ascorbate as cofactor.

The enzyme catalyses L-lysyl-[collagen] + 2-oxoglutarate + O2 = (5R)-5-hydroxy-L-lysyl-[collagen] + succinate + CO2. In terms of biological role, displays two enzymatic activities involved in procollagen processing. Forms hydroxylysine residues in -Xaa-Lys-Gly- sequences in collagens. These hydroxylysines are subsequentially glucosylated by a glucosyltransferase activity. Collagen post-translationally modified is detected in mimivirus virion. The sequence is that of Procollagen lysyl hydroxylase and glycosyltransferase from Acanthamoeba polyphaga (Amoeba).